The primary structure comprises 741 residues: Melanoma-associated antigen D4 (741 aa).

Residues 1–13 (MAEGSFSVQSESY) are compositionally biased toward polar residues. Disordered stretches follow at residues 1–27 (MAEGSFSVQSESYSVEDMDEGSDEVGE), 136–206 (RVAT…EGPS), 247–296 (MAFP…KALA), and 323–379 (PEGA…QPSL). A compositionally biased stretch (acidic residues) spans 14–27 (SVEDMDEGSDEVGE). 2 stretches are compositionally biased toward polar residues: residues 140 to 151 (PQVSGEDTQPTT) and 187 to 196 (TSAQSQTGSP). A compositionally biased stretch (acidic residues) spans 354 to 363 (DEYESSEEER). Residues 413–611 (LQERANKLVK…REWKAHFLEA (199 aa)) enclose the MAGE domain. The tract at residues 700-720 (VSSGTNGGASTSVLDGPSTSS) is disordered. The segment covering 701–720 (SSGTNGGASTSVLDGPSTSS) has biased composition (polar residues).

As to quaternary structure, interacts with TRIM27. In terms of tissue distribution, expressed only in brain and ovary among normal tissues. Isoform 1 and isoform 2 are specifically expressed in glioma cells among cancer cells. Detected in some renal cell carcinoma samples.

May enhance ubiquitin ligase activity of RING-type zinc finger-containing E3 ubiquitin-protein ligases. Proposed to act through recruitment and/or stabilization of the Ubl-conjugating enzyme (E2) at the E3:substrate complex. The polypeptide is Melanoma-associated antigen D4 (MAGED4) (Homo sapiens (Human)).